The chain runs to 559 residues: Actin-binding protein WASF1 (559 aa).

Disordered stretches follow at residues 169–202, 307–400, and 412–492; these read TEDK…DRRR, RPQS…SPPV, and VHPL…STLP. Basic and acidic residues predominate over residues 182–202; the sequence is KNLDRPHEPEKVPRAPHDRRR. Pro residues predominate over residues 322–332; the sequence is PTPPPPPPPLP. Low complexity predominate over residues 333–346; it reads SALSTSSLRASMTS. R341 is subject to Asymmetric dimethylarginine; alternate. Omega-N-methylarginine; alternate is present on R341. Composition is skewed to pro residues over residues 347 to 374, 384 to 399, 423 to 437, and 458 to 477; these read TPPP…PPAP, PAPP…PSPP, LPPP…PPGI, and TPSP…PPSQ. At S489 the chain carries Phosphoserine. The WH2 domain maps to 497–514; the sequence is ARSVLLEAIRKGIQLRKV.

This sequence belongs to the SCAR/WAVE family. Component of the WAVE1 complex composed of ABI2, CYFIP1 or CYFIP2, BRK1, NCKAP1 and WASF1/WAVE1. Within the complex, a heterodimer containing NCKAP1 and CYFIP1 interacts with a heterotrimer formed by WAVE1, ABI2 and BRK1. CYFIP2 binds to activated RAC1 which causes the complex to dissociate, releasing activated WASF1. The complex can also be activated by NCK1. Binds actin and the Arp2/3 complex. Interacts with BAIAP2. Interacts with SHANK3; the interaction mediates the association of SHANK3 with the WAVE1 complex. Interacts with ABI1 (via N-terminus). Interacts with SORBS2; this interaction greatly enhances phosphorylation by ABL1 and dephosphorylation by PTPN12 and might mediate partial to focal adhesion sites. As to expression, expressed in hippocampal neurons (at protein level).

The protein localises to the cytoplasm. It localises to the cytoskeleton. It is found in the synapse. Its subcellular location is the cell junction. The protein resides in the focal adhesion. Downstream effector molecule involved in the transmission of signals from tyrosine kinase receptors and small GTPases to the actin cytoskeleton. Promotes formation of actin filaments. Part of the WAVE complex that regulates lamellipodia formation. The WAVE complex regulates actin filament reorganization via its interaction with the Arp2/3 complex. As component of the WAVE1 complex, required for BDNF-NTRK2 endocytic trafficking and signaling from early endosomes. Also involved in the regulation of mitochondrial dynamics. In Rattus norvegicus (Rat), this protein is Actin-binding protein WASF1 (Wasf1).